Consider the following 710-residue polypeptide: Zinc finger and BTB domain-containing protein 24 (710 aa).

Positions 37–103 constitute a BTB domain; it reads CDITLIVENV…IYTGYLHASE (67 aa). Disordered regions lie at residues 134–176 and 202–256; these read APKP…EGRS and EEDS…SRRR. Positions 159–171 form a DNA-binding region, a.T hook; that stretch reads KRKRGRPRKANGL. Basic and acidic residues-rich tracts occupy residues 202-219 and 231-244; these read EEDS…KESE and PAEK…KAGD. 8 C2H2-type zinc fingers span residues 293–315, 321–343, 349–371, 377–399, 405–427, 433–455, 461–483, and 489–511; these read ARCK…QRRH, FKCN…TRMH, YTCT…MSLH, FTCD…YRVH, PECS…LRTH, FTCE…IRIH, YSCS…CILH, and FSCP…LKIH. The tract at residues 651 to 676 is disordered; the sequence is EQTTSSVPAADTGARATPVPSTRPGA.

This sequence belongs to the krueppel C2H2-type zinc-finger protein family. Interacts with MN1. As to expression, widely expressed. Highest level in liver, testis and kidney.

The protein localises to the nucleus. Its function is as follows. May be involved in BMP2-induced transcription. This Mus musculus (Mouse) protein is Zinc finger and BTB domain-containing protein 24 (Zbtb24).